Consider the following 223-residue polypeptide: Pyridoxine/pyridoxamine 5'-phosphate oxidase (223 aa).

Residues 13–16 (RKNY) and Lys-73 contribute to the substrate site. Residues 68–73 (RIVLLK), 83–84 (YT), Lys-90, and Gln-112 each bind FMN. 3 residues coordinate substrate: Tyr-130, Arg-134, and Ser-138. Residues 147-148 (QS) and Trp-193 each bind FMN. Position 199 to 201 (199 to 201 (RLH)) interacts with substrate. Arg-203 serves as a coordination point for FMN.

It belongs to the pyridoxamine 5'-phosphate oxidase family. As to quaternary structure, homodimer. The cofactor is FMN.

It catalyses the reaction pyridoxamine 5'-phosphate + O2 + H2O = pyridoxal 5'-phosphate + H2O2 + NH4(+). The enzyme catalyses pyridoxine 5'-phosphate + O2 = pyridoxal 5'-phosphate + H2O2. It participates in cofactor metabolism; pyridoxal 5'-phosphate salvage; pyridoxal 5'-phosphate from pyridoxamine 5'-phosphate: step 1/1. It functions in the pathway cofactor metabolism; pyridoxal 5'-phosphate salvage; pyridoxal 5'-phosphate from pyridoxine 5'-phosphate: step 1/1. Functionally, catalyzes the oxidation of either pyridoxine 5'-phosphate (PNP) or pyridoxamine 5'-phosphate (PMP) into pyridoxal 5'-phosphate (PLP). The chain is Pyridoxine/pyridoxamine 5'-phosphate oxidase from Rhodopirellula baltica (strain DSM 10527 / NCIMB 13988 / SH1).